The chain runs to 498 residues: MSDAAVVILAAGAGTRMKSDTPKVLHSLAGRSMLAHSMHAVAGLGPRHLVVVVGKHREQVAPAALQIGEHLGRTVDIAVQEEQRGTGHAVECGLAALPADFHGVVVVTAGDVPLLDTDTLAQLIATHDAESADVTLLTTTMADPTGYGRILRTQDGEVIGIVEQADATESQRAITEVNAAVYAFGVGALRSALSRLKTDNAQGELYLTDAIALVRGDGGTVRAVHVDDPALVAGVNDRVQLADLGAELNRRVVAAHQRAGVTIVDPATTWIDVDVTIGRDTVVRPGTQLLGATAVGGRCEIGPDTTLTDVTVGDGAQVIRTHGTSSQIGAGAVVGPFTYLRPGTALGADGKLGAFVETKNATIGTGTKVPHLTYVGDADIGEHSNIGASSVFVNYDGETKSRTTIGSHVRTGSDTMFVAPVTVGDGAYTGAGTVIRDDVPPGALAVSAGPQRNIEGWVARKRPGSKAAAAAEAAAADGDTAAADRAAATAKPAPATGE.

Residues 1–238 (MSDAAVVILA…PALVAGVNDR (238 aa)) form a pyrophosphorylase region. UDP-N-acetyl-alpha-D-glucosamine contacts are provided by residues 9-12 (LAAG), Lys23, Gln80, and 85-86 (GT). Asp111 lines the Mg(2+) pocket. Positions 148, 163, 178, and 236 each coordinate UDP-N-acetyl-alpha-D-glucosamine. Asn236 contributes to the Mg(2+) binding site. The linker stretch occupies residues 239 to 259 (VQLADLGAELNRRVVAAHQRA). The N-acetyltransferase stretch occupies residues 260-498 (GVTIVDPATT…TAKPAPATGE (239 aa)). Arg341 and Lys359 together coordinate UDP-N-acetyl-alpha-D-glucosamine. Residue His371 is the Proton acceptor of the active site. Tyr374 and Asn385 together coordinate UDP-N-acetyl-alpha-D-glucosamine. Acetyl-CoA is bound by residues Ala388, 394 to 395 (NY), Ser413, and Ala431. The disordered stretch occupies residues 470–498 (AAEAAAADGDTAAADRAAATAKPAPATGE).

This sequence in the N-terminal section; belongs to the N-acetylglucosamine-1-phosphate uridyltransferase family. The protein in the C-terminal section; belongs to the transferase hexapeptide repeat family. As to quaternary structure, homotrimer. Mg(2+) is required as a cofactor.

It is found in the cytoplasm. The enzyme catalyses alpha-D-glucosamine 1-phosphate + acetyl-CoA = N-acetyl-alpha-D-glucosamine 1-phosphate + CoA + H(+). The catalysed reaction is N-acetyl-alpha-D-glucosamine 1-phosphate + UTP + H(+) = UDP-N-acetyl-alpha-D-glucosamine + diphosphate. It participates in nucleotide-sugar biosynthesis; UDP-N-acetyl-alpha-D-glucosamine biosynthesis; N-acetyl-alpha-D-glucosamine 1-phosphate from alpha-D-glucosamine 6-phosphate (route II): step 2/2. It functions in the pathway nucleotide-sugar biosynthesis; UDP-N-acetyl-alpha-D-glucosamine biosynthesis; UDP-N-acetyl-alpha-D-glucosamine from N-acetyl-alpha-D-glucosamine 1-phosphate: step 1/1. Its pathway is bacterial outer membrane biogenesis; LPS lipid A biosynthesis. Its function is as follows. Catalyzes the last two sequential reactions in the de novo biosynthetic pathway for UDP-N-acetylglucosamine (UDP-GlcNAc). The C-terminal domain catalyzes the transfer of acetyl group from acetyl coenzyme A to glucosamine-1-phosphate (GlcN-1-P) to produce N-acetylglucosamine-1-phosphate (GlcNAc-1-P), which is converted into UDP-GlcNAc by the transfer of uridine 5-monophosphate (from uridine 5-triphosphate), a reaction catalyzed by the N-terminal domain. In Mycolicibacterium gilvum (strain PYR-GCK) (Mycobacterium gilvum (strain PYR-GCK)), this protein is Bifunctional protein GlmU.